The primary structure comprises 586 residues: Aspartate--tRNA(Asp/Asn) ligase (586 aa).

Glu-172 provides a ligand contact to L-aspartate. The segment at Gln-196–Lys-199 is aspartate. Residue Arg-218 coordinates L-aspartate. Residues Arg-218–Glu-220 and Gln-227 contribute to the ATP site. Residue His-446 participates in L-aspartate binding. ATP is bound at residue Glu-480. Residue Arg-487 coordinates L-aspartate. Gly-532 to Arg-535 serves as a coordination point for ATP.

It belongs to the class-II aminoacyl-tRNA synthetase family. Type 1 subfamily. As to quaternary structure, homodimer.

The protein resides in the cytoplasm. It carries out the reaction tRNA(Asx) + L-aspartate + ATP = L-aspartyl-tRNA(Asx) + AMP + diphosphate. In terms of biological role, aspartyl-tRNA synthetase with relaxed tRNA specificity since it is able to aspartylate not only its cognate tRNA(Asp) but also tRNA(Asn). Reaction proceeds in two steps: L-aspartate is first activated by ATP to form Asp-AMP and then transferred to the acceptor end of tRNA(Asp/Asn). This is Aspartate--tRNA(Asp/Asn) ligase from Borrelia garinii subsp. bavariensis (strain ATCC BAA-2496 / DSM 23469 / PBi) (Borreliella bavariensis).